Here is a 114-residue protein sequence, read N- to C-terminus: Tyrosine-protein phosphatase 13 (114 aa).

The region spanning 1–114 (WRMLWEHNST…QFGQEGPITI (114 aa)) is the Tyrosine-protein phosphatase domain. Glu-82 lines the substrate pocket.

The protein belongs to the protein-tyrosine phosphatase family.

The catalysed reaction is O-phospho-L-tyrosyl-[protein] + H2O = L-tyrosyl-[protein] + phosphate. The polypeptide is Tyrosine-protein phosphatase 13 (STY-13) (Styela plicata (Wrinkled sea squirt)).